We begin with the raw amino-acid sequence, 315 residues long: Initiation factor TFIIB homolog (315 aa).

The protein belongs to the asfivirus C315R family.

Functionally, putative initation factor. The polypeptide is Initiation factor TFIIB homolog (African swine fever virus (strain Badajoz 1971 Vero-adapted) (Ba71V)).